We begin with the raw amino-acid sequence, 203 residues long: Protein-L-isoaspartate O-methyltransferase (203 aa).

Serine 50 is a catalytic residue.

Belongs to the methyltransferase superfamily. L-isoaspartyl/D-aspartyl protein methyltransferase family.

The protein localises to the cytoplasm. The catalysed reaction is [protein]-L-isoaspartate + S-adenosyl-L-methionine = [protein]-L-isoaspartate alpha-methyl ester + S-adenosyl-L-homocysteine. In terms of biological role, catalyzes the methyl esterification of L-isoaspartyl residues in peptides and proteins that result from spontaneous decomposition of normal L-aspartyl and L-asparaginyl residues. It plays a role in the repair and/or degradation of damaged proteins. The sequence is that of Protein-L-isoaspartate O-methyltransferase from Methanococcoides burtonii (strain DSM 6242 / NBRC 107633 / OCM 468 / ACE-M).